Reading from the N-terminus, the 424-residue chain is Histidine--tRNA ligase (424 aa).

Belongs to the class-II aminoacyl-tRNA synthetase family. Homodimer.

It localises to the cytoplasm. It carries out the reaction tRNA(His) + L-histidine + ATP = L-histidyl-tRNA(His) + AMP + diphosphate + H(+). In Bacillus subtilis (strain 168), this protein is Histidine--tRNA ligase (hisS).